Here is a 498-residue protein sequence, read N- to C-terminus: Zinc finger protein 497 (498 aa).

Residues 30–104 (SEGAVSGGWG…LRPSPLPEEP (75 aa)) are disordered. C2H2-type zinc fingers lie at residues 106–128 (CRCGECGKAFSQGSYLLQHRRVH), 134–156 (YTCPECGKAFAWSSNLSQHQRIH), 162–184 (YACRECGKAFRAHSQLIHHQETH), 190–212 (FRCPDCGKSFGRSTTLVQHRRTH), 218–240 (YECPECGKAFSWNSNFLEHRRVH), 246–268 (HACRDCGKAFSQSSNLAEHLKIH), 274–296 (HACPDCGKAFVRVAGLRQHRRTH), 302–324 (FPCAECGKAFRESSQLLQHQRTH), 330–352 (FECAECGQAFVMGSYLAEHRRVH), 358–380 (HACAQCGKAFSQRSNLLSHRRTH), 386–408 (FACADCGKAFRGSSGLAHHRLSH), 414–436 (FACAECGKAFRGSSELRQHQRLH), 442–464 (FVCAHCSKAFVRKSELLSHRRTH), and 470–492 (YACGECGKPFSHRCNLNEHQKRH).

This sequence belongs to the krueppel C2H2-type zinc-finger protein family.

Its subcellular location is the nucleus. Its function is as follows. May be involved in transcriptional regulation. This chain is Zinc finger protein 497 (ZNF497), found in Homo sapiens (Human).